A 519-amino-acid polypeptide reads, in one-letter code: Phosphate acetyltransferase (519 aa).

Residues 196–519 (AFQRSLEKKA…LISAIQAQDY (324 aa)) form a phosphate acetyltransferase region.

It in the N-terminal section; belongs to the CobB/CobQ family. In the C-terminal section; belongs to the phosphate acetyltransferase and butyryltransferase family.

The protein localises to the cytoplasm. The catalysed reaction is acetyl-CoA + phosphate = acetyl phosphate + CoA. The protein operates within metabolic intermediate biosynthesis; acetyl-CoA biosynthesis; acetyl-CoA from acetate: step 2/2. The chain is Phosphate acetyltransferase (pta) from Helicobacter pylori (strain J99 / ATCC 700824) (Campylobacter pylori J99).